The sequence spans 218 residues: Large ribosomal subunit protein uL3 (218 aa).

The tract at residues 126–170 is disordered; the sequence is HGFSRGPMSHGSKNHREPGSTGAGTTPGRIYPGKRMAGRYGGKKR.

This sequence belongs to the universal ribosomal protein uL3 family. Part of the 50S ribosomal subunit. Forms a cluster with proteins L14 and L19.

One of the primary rRNA binding proteins, it binds directly near the 3'-end of the 23S rRNA, where it nucleates assembly of the 50S subunit. In Prochlorococcus marinus (strain MIT 9313), this protein is Large ribosomal subunit protein uL3.